Reading from the N-terminus, the 471-residue chain is GTPase Der (471 aa).

EngA-type G domains are found at residues 3-166 (PTLA…EPEA) and 177-350 (IKLA…SSAT). GTP is bound by residues 9–16 (GRPNVGKS), 56–60 (DTGGI), 118–121 (NKVD), 183–190 (GRPNVGKS), 230–234 (DTAGV), and 295–298 (NKWD). The region spanning 351–435 (EKLNTNFLTK…PIRFEFKSSE (85 aa)) is the KH-like domain. The disordered stretch occupies residues 432 to 471 (KSSENPFAGRKNAMSKKPEHPSRRANSGGKSINRRPRPKS).

Belongs to the TRAFAC class TrmE-Era-EngA-EngB-Septin-like GTPase superfamily. EngA (Der) GTPase family. In terms of assembly, associates with the 50S ribosomal subunit.

Its function is as follows. GTPase that plays an essential role in the late steps of ribosome biogenesis. The polypeptide is GTPase Der (Saccharophagus degradans (strain 2-40 / ATCC 43961 / DSM 17024)).